The following is a 160-amino-acid chain: SsrA-binding protein (160 aa).

It belongs to the SmpB family.

The protein resides in the cytoplasm. In terms of biological role, required for rescue of stalled ribosomes mediated by trans-translation. Binds to transfer-messenger RNA (tmRNA), required for stable association of tmRNA with ribosomes. tmRNA and SmpB together mimic tRNA shape, replacing the anticodon stem-loop with SmpB. tmRNA is encoded by the ssrA gene; the 2 termini fold to resemble tRNA(Ala) and it encodes a 'tag peptide', a short internal open reading frame. During trans-translation Ala-aminoacylated tmRNA acts like a tRNA, entering the A-site of stalled ribosomes, displacing the stalled mRNA. The ribosome then switches to translate the ORF on the tmRNA; the nascent peptide is terminated with the 'tag peptide' encoded by the tmRNA and targeted for degradation. The ribosome is freed to recommence translation, which seems to be the essential function of trans-translation. This Nocardia farcinica (strain IFM 10152) protein is SsrA-binding protein.